The following is a 134-amino-acid chain: Small ribosomal subunit protein uS9 (134 aa).

Positions Arg-113 to Arg-134 are disordered. Positions Tyr-120 to Arg-134 are enriched in basic residues.

It belongs to the universal ribosomal protein uS9 family.

The protein is Small ribosomal subunit protein uS9 (rpsI) of Thermotoga maritima (strain ATCC 43589 / DSM 3109 / JCM 10099 / NBRC 100826 / MSB8).